The chain runs to 443 residues: Eukaryotic translation initiation factor 3 subunit E (443 aa).

The region spanning 249–417 (LDLFFNAGFI…GTVVMNHPPS (169 aa)) is the PCI domain.

The protein belongs to the eIF-3 subunit E family. As to quaternary structure, component of the eukaryotic translation initiation factor 3 (eIF-3) complex.

The protein resides in the cytoplasm. In terms of biological role, component of the eukaryotic translation initiation factor 3 (eIF-3) complex, which is involved in protein synthesis of a specialized repertoire of mRNAs and, together with other initiation factors, stimulates binding of mRNA and methionyl-tRNAi to the 40S ribosome. The eIF-3 complex specifically targets and initiates translation of a subset of mRNAs involved in cell proliferation. This is Eukaryotic translation initiation factor 3 subunit E (int-6) from Neurospora crassa (strain ATCC 24698 / 74-OR23-1A / CBS 708.71 / DSM 1257 / FGSC 987).